The following is an 85-amino-acid chain: Protein WIR1B (85 aa).

Topologically, residues 1–12 (MASHSAAGRRPT) are cytoplasmic. The chain crosses the membrane as a helical span at residues 13-34 (ALVHIALFVAIAAVIINSSVCL). Residues 35-85 (GAAVHDAATSGTGALDPNVPAVPTPGGAGQPYTGRGCRTVYGCKPPAGSQP) are Extracellular-facing.

The protein localises to the membrane. Functionally, associated with pathogen defense. The chain is Protein WIR1B (WIR1B) from Triticum aestivum (Wheat).